We begin with the raw amino-acid sequence, 465 residues long: Asparagine--tRNA ligase (465 aa).

Belongs to the class-II aminoacyl-tRNA synthetase family. In terms of assembly, homodimer.

It is found in the cytoplasm. It catalyses the reaction tRNA(Asn) + L-asparagine + ATP = L-asparaginyl-tRNA(Asn) + AMP + diphosphate + H(+). The protein is Asparagine--tRNA ligase of Pseudoalteromonas atlantica (strain T6c / ATCC BAA-1087).